The sequence spans 152 residues: uncharacterized protein (152 aa).

The protein localises to the mitochondrion. This is an uncharacterized protein from Arabidopsis thaliana (Mouse-ear cress).